We begin with the raw amino-acid sequence, 231 residues long: Small ribosomal subunit protein uS3 (231 aa).

In terms of domain architecture, KH type-2 spans 39 to 107; sequence IRKHIMKAIP…DVSLNIVEIR (69 aa).

This sequence belongs to the universal ribosomal protein uS3 family. As to quaternary structure, part of the 30S ribosomal subunit. Forms a tight complex with proteins S10 and S14.

In terms of biological role, binds the lower part of the 30S subunit head. Binds mRNA in the 70S ribosome, positioning it for translation. This chain is Small ribosomal subunit protein uS3, found in Rhizorhabdus wittichii (strain DSM 6014 / CCUG 31198 / JCM 15750 / NBRC 105917 / EY 4224 / RW1) (Sphingomonas wittichii).